Reading from the N-terminus, the 565-residue chain is Putative lipase ATG15 (565 aa).

At 1-21 (MISNDYTKFSSKRRSLRYSNR) the chain is on the cytoplasmic side. A helical; Signal-anchor for type II membrane protein membrane pass occupies residues 22–42 (ILLLMGTILLIVVYFYSDILV). Over 43–565 (DKSIIMFRNE…EYTTFTKRLI (523 aa)) the chain is Lumenal. N217 is a glycosylation site (N-linked (GlcNAc...) asparagine). The active-site Charge relay system is the S347. The disordered stretch occupies residues 488–538 (KKPKKQTTSSSSEKVDTSTTKSIDRTTITTRTNEKKWHPNPKDPSTTTTDD). The segment covering 493 to 518 (QTTSSSSEKVDTSTTKSIDRTTITTR) has biased composition (low complexity). The span at 519–528 (TNEKKWHPNP) shows a compositional bias: basic and acidic residues.

This sequence belongs to the AB hydrolase superfamily. Lipase family. In terms of assembly, binds to both phosphatidylinositol (PI) and phosphatidylinositol 3,5-bisphosphate (PIP2).

It is found in the endosome. It localises to the multivesicular body membrane. The protein localises to the prevacuolar compartment membrane. The enzyme catalyses a triacylglycerol + H2O = a diacylglycerol + a fatty acid + H(+). In terms of biological role, lipase which is essential for lysis of subvacuolar cytoplasm to vacuole targeted bodies and intravacuolar autophagic bodies. Involved in the lysis of intravacuolar multivesicular body (MVB) vesicles. The intravacuolar membrane disintegration by ATG15 is critical to life span extension. The polypeptide is Putative lipase ATG15 (ATG15) (Vanderwaltozyma polyspora (strain ATCC 22028 / DSM 70294 / BCRC 21397 / CBS 2163 / NBRC 10782 / NRRL Y-8283 / UCD 57-17) (Kluyveromyces polysporus)).